Consider the following 97-residue polypeptide: Co-chaperonin GroES (97 aa).

It belongs to the GroES chaperonin family. As to quaternary structure, heptamer of 7 subunits arranged in a ring. Interacts with the chaperonin GroEL.

Its subcellular location is the cytoplasm. In terms of biological role, together with the chaperonin GroEL, plays an essential role in assisting protein folding. The GroEL-GroES system forms a nano-cage that allows encapsulation of the non-native substrate proteins and provides a physical environment optimized to promote and accelerate protein folding. GroES binds to the apical surface of the GroEL ring, thereby capping the opening of the GroEL channel. In Pseudarthrobacter chlorophenolicus (strain ATCC 700700 / DSM 12829 / CIP 107037 / JCM 12360 / KCTC 9906 / NCIMB 13794 / A6) (Arthrobacter chlorophenolicus), this protein is Co-chaperonin GroES.